Consider the following 327-residue polypeptide: MQGKVALEEHFAIPETLQDSAGFVPGDYWKELQHRLLDIQDTRLKLMDAHGIETMILSLNAPAVQAIPDRRKAIEIARRANDVLAEECAKRPDRFLAFAALPLQDPDAATEELQRCVNDLGFVGALVNGFSQEGDGQTPLYYDLPQYRPFWGEVEKLDVPFYLHPRNPLPQDSRIYDGHPWLLGPTWAFAQETAVHALRLMASGLFDEHPRLNIILGHMGEGLPYMMWRIDHRNAWVKLPPRYPAKRRFMDYFNENFHITTSGNFRTQTLIDAILEIGADRILFSTDWPFENIDHASDWFNATSIAEADRVKIGRTNARRLFKLDGA.

Zn(2+) is bound by residues E8 and H10. Residues F23, H164, and D287 each contribute to the 2,6-dihydroxybenzoate site. H164 and D287 together coordinate Zn(2+). The active site involves D287.

The protein belongs to the metallo-dependent hydrolases superfamily. ACMSD family. As to quaternary structure, homotetramer. Dimer of dimers. It depends on Zn(2+) as a cofactor.

The catalysed reaction is 2,6-dihydroxybenzoate + H(+) = resorcinol + CO2. The enzyme catalyses 2,3-dihydroxybenzoate + H(+) = catechol + CO2. Its pathway is aromatic compound metabolism. With respect to regulation, inhibited by CuCl(2), monoiodoacetate and diethylpyrocarbonate. Inhibited by 2,3-dihydroxybenzaldehyde, which is an analog of the substrate 2,3-dihydroxybenzoate. Functionally, involved in the gamma-resorcylate (2,6-dihydroxybenzoate) catabolism. Catalyzes the reversible decarboxylation of gamma-resorcylate to resorcinol. The reaction is reversible, but equilibrium greatly favors the decarboxylation reaction. Also catalyzes the decarboxylation of 2,3-dihydroxybenzoate to catechol, but does not act on 2,4-dihydroxybenzoate, 2,5-dihydroxybenzoate, 3,4-dihydroxybenzoate, 3,5-dihydroxybenzoate, 2-hydroxybenzoate, or 3-hydroxybenzoate. Only resorcinol is carboxylated by the reverse reaction. In Rhizobium sp. (strain MTP-10005), this protein is Gamma-resorcylate decarboxylase.